The chain runs to 520 residues: Maturase K (520 aa).

This sequence belongs to the intron maturase 2 family. MatK subfamily.

The protein localises to the plastid. It is found in the chloroplast. Functionally, usually encoded in the trnK tRNA gene intron. Probably assists in splicing its own and other chloroplast group II introns. This chain is Maturase K, found in Cycas taitungensis (Prince sago).